Reading from the N-terminus, the 575-residue chain is Sialate:O-sulfotransferase 1 (575 aa).

Topologically, residues 1-14 (MAKPFFRLQKFLRR) are cytoplasmic. Residues 15–35 (TQFLLFFLTAAYLMTGSLLLL) form a helical; Signal-anchor for type II membrane protein membrane-spanning segment. Over 36–575 (QRVRVALPQG…TGLPREYVPR (540 aa)) the chain is Extracellular. 2 consecutive WSC domains span residues 142–234 (RGTY…YRVD) and 245–340 (TATY…DTRC). 2 N-linked (GlcNAc...) asparagine glycosylation sites follow: N257 and N348.

Belongs to the WSCD family.

The protein resides in the golgi apparatus membrane. The enzyme catalyses a ganglioside GM1b + 3'-phosphoadenylyl sulfate = an 8-O-sulfo-ganglioside GM1b + adenosine 3',5'-bisphosphate + H(+). In terms of biological role, sialate:O-sulfotransferase which catalyzes 8-O-sulfation at the Sia-glycan level using 3'-phosphoadenosine 5'-phosphosulfate (PAPS) as a donor, forming 8-O-sulfated Sia (Sia8S)-glycans. Displays selectivity toward glycolipids such as GM1 gangliosides. This is Sialate:O-sulfotransferase 1 (WSCD1) from Homo sapiens (Human).